The sequence spans 258 residues: Phycoerythrobilin:ferredoxin oxidoreductase (258 aa).

It belongs to the HY2 family.

The enzyme catalyses (3Z)-phycoerythrobilin + oxidized 2[4Fe-4S]-[ferredoxin] = 15,16-dihydrobiliverdin + reduced 2[4Fe-4S]-[ferredoxin] + 2 H(+). In terms of biological role, catalyzes the two-electron reduction of the C2 and C3(1) diene system of 15,16-dihydrobiliverdin. The sequence is that of Phycoerythrobilin:ferredoxin oxidoreductase from Prochlorococcus marinus (strain NATL1A).